The primary structure comprises 154 residues: Large-conductance mechanosensitive channel (154 aa).

3 helical membrane-spanning segments follow: residues 16-36 (VLGLGIAVIMGDAFNKIISSV), 39-59 (DLLMPIIGAVFGGVDFSGFFI), and 89-109 (GQFLTVVVNFVIVAFILFMIM).

It belongs to the MscL family. In terms of assembly, homopentamer.

The protein localises to the cell inner membrane. In terms of biological role, channel that opens in response to stretch forces in the membrane lipid bilayer. May participate in the regulation of osmotic pressure changes within the cell. This Zymomonas mobilis subsp. mobilis (strain ATCC 31821 / ZM4 / CP4) protein is Large-conductance mechanosensitive channel.